Here is a 181-residue protein sequence, read N- to C-terminus: uncharacterized protein (181 aa).

The Macro domain occupies M1–L178.

This is an uncharacterized protein from Sulfolobus acidocaldarius (strain ATCC 33909 / DSM 639 / JCM 8929 / NBRC 15157 / NCIMB 11770).